Reading from the N-terminus, the 663-residue chain is Probable serine/threonine-protein kinase DDB_G0283301 (663 aa).

The Protein kinase domain occupies 312 to 586; it reads IERRNELGRG…EECVERLITL (275 aa). Residues 318–326 and K348 contribute to the ATP site; that span reads LGRGGNGTV. The Proton acceptor role is filled by D440.

This sequence belongs to the protein kinase superfamily. Ser/Thr protein kinase family.

It catalyses the reaction L-seryl-[protein] + ATP = O-phospho-L-seryl-[protein] + ADP + H(+). It carries out the reaction L-threonyl-[protein] + ATP = O-phospho-L-threonyl-[protein] + ADP + H(+). The chain is Probable serine/threonine-protein kinase DDB_G0283301 from Dictyostelium discoideum (Social amoeba).